The chain runs to 653 residues: Acetyl-coenzyme A synthetase 1 (653 aa).

CoA-binding positions include 191-194, Thr-311, and Asn-335; that span reads RGGR. ATP contacts are provided by residues 387 to 389, 411 to 416, Asp-500, and Arg-515; these read GEP and DTWWQT. CoA is bound at residue Ser-523. An ATP-binding site is contributed by Arg-526. Mg(2+) contacts are provided by Val-537, His-539, and Val-542. Arg-584 is a CoA binding site. Position 609 is an N6-acetyllysine (Lys-609).

The protein belongs to the ATP-dependent AMP-binding enzyme family. Mg(2+) serves as cofactor. Acetylated. Deacetylation by the SIR2-homolog deacetylase activates the enzyme.

The enzyme catalyses acetate + ATP + CoA = acetyl-CoA + AMP + diphosphate. In terms of biological role, catalyzes the conversion of acetate into acetyl-CoA (AcCoA), an essential intermediate at the junction of anabolic and catabolic pathways. AcsA undergoes a two-step reaction. In the first half reaction, AcsA combines acetate with ATP to form acetyl-adenylate (AcAMP) intermediate. In the second half reaction, it can then transfer the acetyl group from AcAMP to the sulfhydryl group of CoA, forming the product AcCoA. The chain is Acetyl-coenzyme A synthetase 1 from Pseudomonas putida (strain ATCC 47054 / DSM 6125 / CFBP 8728 / NCIMB 11950 / KT2440).